The primary structure comprises 456 residues: Exodeoxyribonuclease 7 large subunit (456 aa).

It belongs to the XseA family. Heterooligomer composed of large and small subunits.

The protein localises to the cytoplasm. The enzyme catalyses Exonucleolytic cleavage in either 5'- to 3'- or 3'- to 5'-direction to yield nucleoside 5'-phosphates.. Its function is as follows. Bidirectionally degrades single-stranded DNA into large acid-insoluble oligonucleotides, which are then degraded further into small acid-soluble oligonucleotides. This is Exodeoxyribonuclease 7 large subunit from Lactobacillus delbrueckii subsp. bulgaricus (strain ATCC BAA-365 / Lb-18).